Here is a 49-residue protein sequence, read N- to C-terminus: MVMAVYRCAKCGKEVELDLENTREVRCPYCGSKILYKPRPRVARRVKAI.

Zn(2+) is bound by residues C11, C27, and C30.

Belongs to the archaeal Rpo12/eukaryotic RPC10 RNA polymerase subunit family. Part of the RNA polymerase complex. It depends on Zn(2+) as a cofactor.

The protein localises to the cytoplasm. It catalyses the reaction RNA(n) + a ribonucleoside 5'-triphosphate = RNA(n+1) + diphosphate. DNA-dependent RNA polymerase (RNAP) catalyzes the transcription of DNA into RNA using the four ribonucleoside triphosphates as substrates. The sequence is that of DNA-directed RNA polymerase subunit Rpo12 from Thermococcus onnurineus (strain NA1).